The primary structure comprises 274 residues: Large ribosomal subunit protein uL2 (274 aa).

Disordered stretches follow at residues A28–G55 and V224–K274.

The protein belongs to the universal ribosomal protein uL2 family. Part of the 50S ribosomal subunit. Forms a bridge to the 30S subunit in the 70S ribosome.

One of the primary rRNA binding proteins. Required for association of the 30S and 50S subunits to form the 70S ribosome, for tRNA binding and peptide bond formation. It has been suggested to have peptidyltransferase activity; this is somewhat controversial. Makes several contacts with the 16S rRNA in the 70S ribosome. The chain is Large ribosomal subunit protein uL2 from Pseudomonas putida (strain W619).